Consider the following 354-residue polypeptide: Guanine nucleotide-binding protein G(t) subunit alpha-3 (354 aa).

The interval 1-27 is disordered; it reads MGSGISSESKESAKRSKELEKKLQEDA. A lipid anchor (N-myristoyl glycine) is attached at glycine 2. The segment covering 8–27 has biased composition (basic and acidic residues); it reads ESKESAKRSKELEKKLQEDA. The G-alpha domain maps to 32-354; sequence RTVKLLLLGA…KENLKDCGLF (323 aa). The G1 motif stretch occupies residues 35-48; the sequence is KLLLLGAGESGKST. Residues 40–47, 175–181, 200–204, 269–272, and alanine 326 each bind GTP; these read GAGESGKS, LHSRVKT, DVGGQ, and NKKD. Positions 47 and 181 each coordinate Mg(2+). The tract at residues 173–181 is G2 motif; it reads DVLHSRVKT. A G3 motif region spans residues 196-205; sequence FRMFDVGGQR. The interval 265–272 is G4 motif; the sequence is VLFLNKKD. The tract at residues 324–329 is G5 motif; that stretch reads TCATDT.

It belongs to the G-alpha family. G(i/o/t/z) subfamily. G proteins are composed of 3 units; alpha, beta and gamma, respectively GNAT3, GNB1 and GNG13 for Gustducin heterotrimer for bitter taste transduction. The alpha chain contains the guanine nucleotide binding site. Component of the TAS2R14-GNAT3 complex, consisting of TAS2R14, GNAT3, GNB1 and GNG2; within the complex interacts with TAS2R14; this complex plays a role in the perception of bitterness. Gustducin heterotrimer may also be composed of GNAT3, GNB3 and GNG13. In terms of processing, potential N-myristoylation may anchor alpha-subunit to the inner surface of plasma membrane. Expressed in taste buds (sensory organs of clustered epithelial cells) of the circumvallate and foliate papillae of the tongue at protein level. Expressed in enteroendocrine L cells of the gut. Detected also in spermatozoa.

The protein resides in the cytoplasm. Guanine nucleotide-binding protein (G protein) alpha subunit playing a prominent role in bitter and sweet taste transduction as well as in umami (monosodium glutamate, monopotassium glutamate, and inosine monophosphate) taste transduction. Transduction by this alpha subunit involves coupling of specific cell-surface receptors with a cGMP-phosphodiesterase; Activation of phosphodiesterase lowers intracellular levels of cAMP and cGMP which may open a cyclic nucleotide-suppressible cation channel leading to influx of calcium, ultimately leading to release of neurotransmitter. Indeed, denatonium and strychnine induce transient reduction in cAMP and cGMP in taste tissue, whereas this decrease is inhibited by GNAT3 antibody. Gustducin heterotrimer transduces response to bitter and sweet compounds via regulation of phosphodiesterase for alpha subunit, as well as via activation of phospholipase C for beta and gamma subunits, with ultimate increase inositol trisphosphate and increase of intracellular Calcium. GNAT3 can functionally couple to taste receptors to transmit intracellular signal: receptor heterodimer TAS1R2/TAS1R3 senses sweetness and TAS1R1/TAS1R3 transduces umami taste, whereas the T2R family GPCRs such as TAS2R14 act as bitter sensors. Also functions as lumenal sugar sensors in the gut to control the expression of the Na+-glucose transporter SGLT1 in response to dietaty sugar, as well as the secretion of Glucagon-like peptide-1, GLP-1 and glucose-dependent insulinotropic polypeptide, GIP. Thus, may modulate the gut capacity to absorb sugars, with implications in malabsorption syndromes and diet-related disorders including diabetes and obesity. The protein is Guanine nucleotide-binding protein G(t) subunit alpha-3 (GNAT3) of Homo sapiens (Human).